Here is a 204-residue protein sequence, read N- to C-terminus: Large ribosomal subunit protein uL22c (204 aa).

Belongs to the universal ribosomal protein uL22 family. As to quaternary structure, part of the 50S ribosomal subunit.

The protein resides in the plastid. The protein localises to the chloroplast. This protein binds specifically to 23S rRNA. Functionally, the globular domain of the protein is located near the polypeptide exit tunnel on the outside of the subunit, while an extended beta-hairpin is found that lines the wall of the exit tunnel in the center of the 70S ribosome. The protein is Large ribosomal subunit protein uL22c (rpl22) of Pisum sativum (Garden pea).